A 155-amino-acid polypeptide reads, in one-letter code: Small ribosomal subunit protein uS9 (155 aa).

This sequence belongs to the universal ribosomal protein uS9 family.

This is Small ribosomal subunit protein uS9 from Rhizobium leguminosarum bv. trifolii (strain WSM2304).